We begin with the raw amino-acid sequence, 388 residues long: Palmitoyltransferase ZDHHC18-B (388 aa).

A disordered region spans residues 1–33 (MKNREYQQIDPQALATPTPTPPPRSLPEHKPRR). The Cytoplasmic segment spans residues 1-58 (MKNREYQQIDPQALATPTPTPPPRSLPEHKPRRARRKWEVFPGKNRFYCDGRIIVARQ). Residues 59 to 79 (SGVLPLTLGLILLTSGLFFIF) form a helical membrane-spanning segment. At 80–87 (DCPFLVKH) the chain is on the lumenal side. A helical membrane pass occupies residues 88–108 (LTSCIPAIGGVLFVFVIISLL). Topologically, residues 109 to 205 (QTSFTDPGIL…GNCVGKRNYR (97 aa)) are cytoplasmic. Residues 162 to 212 (KYCFTCKIFRPPRTSHCSLCDNCVERFDHHCPWVGNCVGKRNYRFFYTFIV) form the DHHC domain. Catalysis depends on C192, which acts as the S-palmitoyl cysteine intermediate. A helical transmembrane segment spans residues 206–226 (FFYTFIVSLSFLTAFIFGCVT). Topologically, residues 227–253 (THLALRSQGGNGLVNALQSSPASALEL) are lumenal. A helical transmembrane segment spans residues 254 to 274 (VVCFFSVWSILGLSGFHTYLV). Topologically, residues 275–388 (AANLTTNEDI…AISMQNHSTA (114 aa)) are cytoplasmic.

This sequence belongs to the DHHC palmitoyltransferase family. ERF2/ZDHHC9 subfamily.

Its subcellular location is the golgi apparatus membrane. The catalysed reaction is L-cysteinyl-[protein] + hexadecanoyl-CoA = S-hexadecanoyl-L-cysteinyl-[protein] + CoA. Functionally, palmitoyltransferase that catalyzes the addition of palmitate onto various protein substrates, such as CGAS, HRAS and LCK. In Danio rerio (Zebrafish), this protein is Palmitoyltransferase ZDHHC18-B.